Reading from the N-terminus, the 361-residue chain is Chorismate synthase (361 aa).

2 residues coordinate NADP(+): Arg48 and Arg54. Residues 125-127 (RSS), 238-239 (NA), Gly278, 293-297 (KPTSS), and Arg319 each bind FMN.

This sequence belongs to the chorismate synthase family. As to quaternary structure, homotetramer. The cofactor is FMNH2.

It catalyses the reaction 5-O-(1-carboxyvinyl)-3-phosphoshikimate = chorismate + phosphate. It functions in the pathway metabolic intermediate biosynthesis; chorismate biosynthesis; chorismate from D-erythrose 4-phosphate and phosphoenolpyruvate: step 7/7. Catalyzes the anti-1,4-elimination of the C-3 phosphate and the C-6 proR hydrogen from 5-enolpyruvylshikimate-3-phosphate (EPSP) to yield chorismate, which is the branch point compound that serves as the starting substrate for the three terminal pathways of aromatic amino acid biosynthesis. This reaction introduces a second double bond into the aromatic ring system. The protein is Chorismate synthase of Sodalis glossinidius (strain morsitans).